The sequence spans 337 residues: Ketol-acid reductoisomerase (NAD(P)(+)) (337 aa).

One can recognise a KARI N-terminal Rossmann domain in the interval 2–187; it reads ARMFYDADAN…GCTRAGVIET (186 aa). NADP(+)-binding positions include 25-28, R48, and 88-91; these read FGSQ and DEVQ. The active site involves H113. Residue G139 participates in NADP(+) binding. In terms of domain architecture, KARI C-terminal knotted spans 188–333; it reads SFQEETETDL…AELRGMMPWL (146 aa). D196, E200, E232, and E236 together coordinate Mg(2+). S257 contributes to the substrate binding site.

The protein belongs to the ketol-acid reductoisomerase family. Mg(2+) serves as cofactor.

The catalysed reaction is (2R)-2,3-dihydroxy-3-methylbutanoate + NAD(+) = (2S)-2-acetolactate + NADH + H(+). The enzyme catalyses (2R)-2,3-dihydroxy-3-methylbutanoate + NADP(+) = (2S)-2-acetolactate + NADPH + H(+). It functions in the pathway amino-acid biosynthesis; L-isoleucine biosynthesis; L-isoleucine from 2-oxobutanoate: step 2/4. The protein operates within amino-acid biosynthesis; L-valine biosynthesis; L-valine from pyruvate: step 2/4. Functionally, involved in the biosynthesis of branched-chain amino acids (BCAA). Catalyzes an alkyl-migration followed by a ketol-acid reduction of (S)-2-acetolactate (S2AL) to yield (R)-2,3-dihydroxy-isovalerate. In the isomerase reaction, S2AL is rearranged via a Mg-dependent methyl migration to produce 3-hydroxy-3-methyl-2-ketobutyrate (HMKB). In the reductase reaction, this 2-ketoacid undergoes a metal-dependent reduction by NADPH or NADH to yield (R)-2,3-dihydroxy-isovalerate. The chain is Ketol-acid reductoisomerase (NAD(P)(+)) from Syntrophomonas wolfei subsp. wolfei (strain DSM 2245B / Goettingen).